The chain runs to 98 residues: N(2)-fixation sustaining protein CowN (98 aa).

The protein belongs to the CowN family.

Is required to sustain N(2)-dependent growth in the presence of low levels of carbon monoxide (CO). Probably acts by protecting the N(2) fixation ability of the nitrogenase complex, which is inactivated in the presence of CO. In Azospirillum sp. (strain B510), this protein is N(2)-fixation sustaining protein CowN.